Here is a 305-residue protein sequence, read N- to C-terminus: MVDKLTHLKQLEAESIHIIREVAAEFDNPVMLYSIGKDSAVMLHLARKAFFPGKLPFPVMHVDTQWKFQEMYSFRDKMVEEMGLELITHVNPEGVAQGINPFTHGSSKHTDIMKTQGLKQALDKHGFDAAFGGARRDEEKSRAKERVYSFRDSKHRWDPKNQRPELWNVYNGKVNKGESIRVFPLSNWTELDIWQYIYLEGIPIVPLYFAAEREVIEKNGTLIMIDDERILEHLSEEEKARIVKKKVRFRTLGCYPLTGAVESEAETLTDIIQEMLLTRTSERQGRVIDHDGAGSMEDKKRQGYF.

The protein belongs to the PAPS reductase family. CysD subfamily. As to quaternary structure, heterodimer composed of CysD, the smaller subunit, and CysN.

It carries out the reaction sulfate + ATP + H(+) = adenosine 5'-phosphosulfate + diphosphate. It participates in sulfur metabolism; hydrogen sulfide biosynthesis; sulfite from sulfate: step 1/3. In terms of biological role, with CysN forms the ATP sulfurylase (ATPS) that catalyzes the adenylation of sulfate producing adenosine 5'-phosphosulfate (APS) and diphosphate, the first enzymatic step in sulfur assimilation pathway. APS synthesis involves the formation of a high-energy phosphoric-sulfuric acid anhydride bond driven by GTP hydrolysis by CysN coupled to ATP hydrolysis by CysD. In Pseudomonas putida (strain ATCC 700007 / DSM 6899 / JCM 31910 / BCRC 17059 / LMG 24140 / F1), this protein is Sulfate adenylyltransferase subunit 2.